The chain runs to 682 residues: Activating transcription factor 7-interacting protein 2 (682 aa).

Positions 120–148 are disordered; sequence SRTTESPSRVFTEEAKDSLNTSENDSEHQ. Polar residues predominate over residues 137 to 148; sequence SLNTSENDSEHQ. The stretch at 328 to 378 forms a coiled coil; it reads EIYSINYELFDKKLKELNQRIGKTECRNKHEGIADKLLAKIAKLQRRIKTV. Serine 416 carries the post-translational modification Phosphoserine. Polar residues-rich tracts occupy residues 418-451 and 462-490; these read IEKS…VSES and ESPN…NSPN. Disordered regions lie at residues 418-491 and 513-538; these read IEKS…SPNA and NCNT…ETTP. Residues serine 488 and serine 521 each carry the phosphoserine modification. Residues 528–538 show a composition bias toward polar residues; that stretch reads KAASNSKETTP. A Fibronectin type-III domain is found at 575 to 680; the sequence is PPQKPELKVK…IKSIPGFSEN (106 aa).

This sequence belongs to the MCAF family. Interacts with MBD1, SETDB1 and SP1. Probably forms a complex with SETDB1 and MBD1.

The protein localises to the nucleus. In terms of biological role, recruiter that couples transcriptional factors to general transcription apparatus and thereby modulates transcription regulation and chromatin formation. Can both act as an activator or a repressor depending on the context. Mediates MBD1-dependent transcriptional repression, probably by recruiting complexes containing SETDB1. The complex formed with MBD1 and SETDB1 represses transcription and probably couples DNA methylation and histone H3 'Lys-9' trimethylation (H3K9me3) activity. This is Activating transcription factor 7-interacting protein 2 (ATF7IP2) from Homo sapiens (Human).